We begin with the raw amino-acid sequence, 493 residues long: Glutamyl-tRNA(Gln) amidotransferase subunit A (493 aa).

Active-site charge relay system residues include K78 and S158. Catalysis depends on S182, which acts as the Acyl-ester intermediate.

The protein belongs to the amidase family. GatA subfamily. In terms of assembly, heterotrimer of A, B and C subunits.

The enzyme catalyses L-glutamyl-tRNA(Gln) + L-glutamine + ATP + H2O = L-glutaminyl-tRNA(Gln) + L-glutamate + ADP + phosphate + H(+). In terms of biological role, allows the formation of correctly charged Gln-tRNA(Gln) through the transamidation of misacylated Glu-tRNA(Gln) in organisms which lack glutaminyl-tRNA synthetase. The reaction takes place in the presence of glutamine and ATP through an activated gamma-phospho-Glu-tRNA(Gln). In Rickettsia felis (strain ATCC VR-1525 / URRWXCal2) (Rickettsia azadi), this protein is Glutamyl-tRNA(Gln) amidotransferase subunit A.